Reading from the N-terminus, the 212-residue chain is Peptide methionine sulfoxide reductase MsrA (212 aa).

C51 is an active-site residue.

The protein belongs to the MsrA Met sulfoxide reductase family.

It carries out the reaction L-methionyl-[protein] + [thioredoxin]-disulfide + H2O = L-methionyl-(S)-S-oxide-[protein] + [thioredoxin]-dithiol. The catalysed reaction is [thioredoxin]-disulfide + L-methionine + H2O = L-methionine (S)-S-oxide + [thioredoxin]-dithiol. Its function is as follows. Has an important function as a repair enzyme for proteins that have been inactivated by oxidation. Catalyzes the reversible oxidation-reduction of methionine sulfoxide in proteins to methionine. In Vibrio cholerae serotype O1 (strain ATCC 39541 / Classical Ogawa 395 / O395), this protein is Peptide methionine sulfoxide reductase MsrA.